The sequence spans 489 residues: uncharacterized protein (489 aa).

Transmembrane regions (helical) follow at residues 29-49 (FIAS…TGLG), 67-87 (LLYA…KYLG), 90-110 (WALA…WYFD), 119-139 (IFTG…TAYI), 152-172 (FIAT…FIAF), 186-206 (AVYI…ILFI), 276-296 (LNNV…TLIL), 308-328 (IIGL…ELGW), 351-371 (GGAL…IVSV), 397-417 (AAGM…LGQG), and 418-438 (IIYF…TSIF).

It is found in the membrane. This is an uncharacterized protein from Schizosaccharomyces pombe (strain 972 / ATCC 24843) (Fission yeast).